A 135-amino-acid chain; its full sequence is Allatotropins (135 aa).

Residues M1–A22 form the signal peptide. F51 is subject to Phenylalanine amide. The propeptide occupies D55–A135.

As to expression, allatotropin: Expressed in corpora cardiaca (CC), corpora allata (CA), antennal lobe (AL) and gnathal ganglion (GNG) (protein level). Expression in AL detected in all animals, expression in GNG detected in most animals and expression in CA and CC detected in few animals (at protein level). Allatotropin-PP-1: Expressed in corpora cardiaca (CC), corpora allata (CA), antennal lobe (AL) and gnathal ganglion (GNG) (at protein level). Expression in AL detected in all animals and expression in GNG, CA and CC detected in some animals (at protein level).

Its subcellular location is the secreted. Neuropeptide stimulator of juvenile hormone synthesis. This chain is Allatotropins, found in Agrotis ipsilon (Black cutworm moth).